Consider the following 49-residue polypeptide: MQVLSSLKEAKLRHRDCQVVRRRGRIYVICKSNPRFKARQGGARNRRKG.

This sequence belongs to the bacterial ribosomal protein bL36 family.

This chain is Large ribosomal subunit protein bL36, found in Delftia acidovorans (strain DSM 14801 / SPH-1).